The chain runs to 145 residues: Large ribosomal subunit protein uL15 (145 aa).

Over residues methionine 1–arginine 18 the composition is skewed to basic and acidic residues. Positions methionine 1–glutamate 51 are disordered. Gly residues predominate over residues serine 42–glutamate 51.

The protein belongs to the universal ribosomal protein uL15 family. In terms of assembly, part of the 50S ribosomal subunit.

Binds to the 23S rRNA. This Mesoplasma florum (strain ATCC 33453 / NBRC 100688 / NCTC 11704 / L1) (Acholeplasma florum) protein is Large ribosomal subunit protein uL15.